Reading from the N-terminus, the 382-residue chain is Succinyl-diaminopimelate desuccinylase (382 aa).

H71 is a Zn(2+) binding site. D73 is an active-site residue. D105 contacts Zn(2+). E139 (proton acceptor) is an active-site residue. Residues E140, E168, and H354 each contribute to the Zn(2+) site.

Belongs to the peptidase M20A family. DapE subfamily. As to quaternary structure, homodimer. Zn(2+) is required as a cofactor. Requires Co(2+) as cofactor.

It catalyses the reaction N-succinyl-(2S,6S)-2,6-diaminopimelate + H2O = (2S,6S)-2,6-diaminopimelate + succinate. It participates in amino-acid biosynthesis; L-lysine biosynthesis via DAP pathway; LL-2,6-diaminopimelate from (S)-tetrahydrodipicolinate (succinylase route): step 3/3. Functionally, catalyzes the hydrolysis of N-succinyl-L,L-diaminopimelic acid (SDAP), forming succinate and LL-2,6-diaminopimelate (DAP), an intermediate involved in the bacterial biosynthesis of lysine and meso-diaminopimelic acid, an essential component of bacterial cell walls. This chain is Succinyl-diaminopimelate desuccinylase, found in Stutzerimonas stutzeri (strain A1501) (Pseudomonas stutzeri).